We begin with the raw amino-acid sequence, 180 residues long: ATP-dependent protease subunit HslV (180 aa).

The active site involves threonine 2. The Na(+) site is built by glycine 158, cysteine 161, and threonine 164.

This sequence belongs to the peptidase T1B family. HslV subfamily. In terms of assembly, a double ring-shaped homohexamer of HslV is capped on each side by a ring-shaped HslU homohexamer. The assembly of the HslU/HslV complex is dependent on binding of ATP.

Its subcellular location is the cytoplasm. The catalysed reaction is ATP-dependent cleavage of peptide bonds with broad specificity.. Its activity is regulated as follows. Allosterically activated by HslU binding. Protease subunit of a proteasome-like degradation complex believed to be a general protein degrading machinery. The chain is ATP-dependent protease subunit HslV from Baumannia cicadellinicola subsp. Homalodisca coagulata.